Reading from the N-terminus, the 337-residue chain is Ketol-acid reductoisomerase (NADP(+)) (337 aa).

A KARI N-terminal Rossmann domain is found at 3 to 183 (VEMFYDDDAD…GGARAGVIKT (181 aa)). NADP(+)-binding positions include 26–29 (YGSQ), Lys49, Ser52, Ser54, and 84–87 (DTAQ). Residue His109 is part of the active site. Gly135 contacts NADP(+). The KARI C-terminal knotted domain occupies 184–329 (TFKEETETDL…KKLRDLMSWV (146 aa)). Positions 192, 196, 228, and 232 each coordinate Mg(2+). Position 253 (Ser253) interacts with substrate.

It belongs to the ketol-acid reductoisomerase family. Mg(2+) is required as a cofactor.

It catalyses the reaction (2R)-2,3-dihydroxy-3-methylbutanoate + NADP(+) = (2S)-2-acetolactate + NADPH + H(+). The catalysed reaction is (2R,3R)-2,3-dihydroxy-3-methylpentanoate + NADP(+) = (S)-2-ethyl-2-hydroxy-3-oxobutanoate + NADPH + H(+). It functions in the pathway amino-acid biosynthesis; L-isoleucine biosynthesis; L-isoleucine from 2-oxobutanoate: step 2/4. It participates in amino-acid biosynthesis; L-valine biosynthesis; L-valine from pyruvate: step 2/4. Its function is as follows. Involved in the biosynthesis of branched-chain amino acids (BCAA). Catalyzes an alkyl-migration followed by a ketol-acid reduction of (S)-2-acetolactate (S2AL) to yield (R)-2,3-dihydroxy-isovalerate. In the isomerase reaction, S2AL is rearranged via a Mg-dependent methyl migration to produce 3-hydroxy-3-methyl-2-ketobutyrate (HMKB). In the reductase reaction, this 2-ketoacid undergoes a metal-dependent reduction by NADPH to yield (R)-2,3-dihydroxy-isovalerate. The polypeptide is Ketol-acid reductoisomerase (NADP(+)) (Rhodococcus opacus (strain B4)).